The primary structure comprises 222 residues: UPF0758 protein TM_1557 (222 aa).

One can recognise an MPN domain in the interval 101-222 (KLDSSVKVYK…YFSFREEGEL (122 aa)). 3 residues coordinate Zn(2+): His171, His173, and Asp184. The short motif at 171–184 (HNHPSGDPTPSKED) is the JAMM motif element.

The protein belongs to the UPF0758 family.

In Thermotoga maritima (strain ATCC 43589 / DSM 3109 / JCM 10099 / NBRC 100826 / MSB8), this protein is UPF0758 protein TM_1557.